A 136-amino-acid polypeptide reads, in one-letter code: MARKIFKYKGYTLEELQDMSLEEVMELFPARQRRSLKRGFLPRQQIVLDKMRKLNKEGSKDGRPVVIRTHCRDMIVLPEMVGTTFGIYNGQNFVEVTIEPEMIGCYFGEFAPTRQKVQHGDPGMGATRSSMFVPLK.

A disordered region spans residues 117–136 (VQHGDPGMGATRSSMFVPLK).

Belongs to the universal ribosomal protein uS19 family.

Its function is as follows. Protein S19 forms a complex with S13 that binds strongly to the 16S ribosomal RNA. This chain is Small ribosomal subunit protein uS19, found in Methanobrevibacter smithii (strain ATCC 35061 / DSM 861 / OCM 144 / PS).